We begin with the raw amino-acid sequence, 357 residues long: Meiotically up-regulated gene 135 protein (357 aa).

This sequence belongs to the UPF0612 family.

The protein resides in the nucleus. In terms of biological role, has a role in meiosis. The protein is Meiotically up-regulated gene 135 protein (mug135) of Schizosaccharomyces pombe (strain 972 / ATCC 24843) (Fission yeast).